The chain runs to 503 residues: MLARSRFILVLVVGALLAVLSFSLQYLHLIPTNPVAEQRSAGRSRKRVNPVLHTDPPAPDPIRDTHQYCNYPNLTEHGWEGHCPPDYKLLSVQVMIRHGDRFPLYSIPKTKKPTIDCILSEKRKPSHPLLASFISHMALGGRGHWDASLGSLPRLPSHSTCEMGELTQTGVVRQLKNGDHLRQAYISRHNLLAADWLPRQLWAETTGKSRTLQSGLAFLFGFLPHFDWSRLTVRQQWSTLFCGQSCDCPARNRYLDQEQRRQYRQRIADAELERTYVTMAKTLGVATKTLRAANPVDALLCHFCHGLPFPCSSTQTSSNAPDEGACLTLEHFAVIRRQQKDDELERREAGLYRRYAVLAAHPYLNRSAARLERIARGSQMRKSKEDAVFALASAHDVTMAPLLSALGLEGAGFPKFAARLVFELWSSPETKERRSDRKLDNMFIRVLYNGEDLTFDTAFCREHNRRSTQPLCPLGNFLSFVRKDMFSVVNATSYQQACHQTVL.

The Cytoplasmic portion of the chain corresponds to 1-6; that stretch reads MLARSR. A helical; Signal-anchor for type II membrane protein membrane pass occupies residues 7 to 27; that stretch reads FILVLVVGALLAVLSFSLQYL. At 28 to 503 the chain is on the lumenal side; sequence HLIPTNPVAE…YQQACHQTVL (476 aa). Residues 38–63 are disordered; that stretch reads QRSAGRSRKRVNPVLHTDPPAPDPIR. Residue Asn73 is glycosylated (N-linked (GlcNAc...) asparagine). The active-site Nucleophile is His98. A glycan (N-linked (GlcNAc...) asparagine) is linked at Asn365. Residue Asp396 is the Proton donor of the active site. An N-linked (GlcNAc...) asparagine glycan is attached at Asn490.

This sequence belongs to the histidine acid phosphatase family.

Its subcellular location is the golgi apparatus membrane. The enzyme catalyses 3-O-[beta-D-GlcA-(1-&gt;3)-beta-D-Gal-(1-&gt;3)-beta-D-Gal-(1-&gt;4)-beta-D-2-O-P-Xyl]-L-seryl-[protein] + H2O = 3-O-(beta-D-GlcA-(1-&gt;3)-beta-D-Gal-(1-&gt;3)-beta-D-Gal-(1-&gt;4)-beta-D-Xyl)-L-seryl-[protein] + phosphate. Functionally, responsible for the 2-O-dephosphorylation of xylose in the glycosaminoglycan-protein linkage region of proteoglycans thereby regulating the amount of mature glycosaminoglycan (GAG) chains. Sulfated glycosaminoglycans (GAGs), including heparan sulfate and chondroitin sulfate, are synthesized on the so-called common GAG-protein linkage region (GlcUAbeta1-3Galbeta1-3Galbeta1-4Xylbeta1-O-Ser) of core proteins, which is formed by the stepwise addition of monosaccharide residues by the respective specific glycosyltransferases. This chain is 2-phosphoxylose phosphatase 1, found in Danio rerio (Zebrafish).